Here is a 304-residue protein sequence, read N- to C-terminus: Protoheme IX farnesyltransferase 1 (304 aa).

Transmembrane regions (helical) follow at residues 24 to 44 (VVVL…KAPL), 47 to 67 (FVPW…AGAA), 99 to 119 (MALG…LAFT), 122 to 142 (LTAW…TGFL), 150 to 170 (IVIG…AITG), 176 to 196 (PLLL…ALCI), 228 to 248 (LVLF…LVYL), and 280 to 300 (YSIV…YLPL).

The protein belongs to the UbiA prenyltransferase family. Protoheme IX farnesyltransferase subfamily.

The protein resides in the cell inner membrane. It catalyses the reaction heme b + (2E,6E)-farnesyl diphosphate + H2O = Fe(II)-heme o + diphosphate. It functions in the pathway porphyrin-containing compound metabolism; heme O biosynthesis; heme O from protoheme: step 1/1. Converts heme B (protoheme IX) to heme O by substitution of the vinyl group on carbon 2 of heme B porphyrin ring with a hydroxyethyl farnesyl side group. The protein is Protoheme IX farnesyltransferase 1 of Pseudomonas paraeruginosa (strain DSM 24068 / PA7) (Pseudomonas aeruginosa (strain PA7)).